The sequence spans 395 residues: Tyrosine--tRNA ligase 2 (395 aa).

Positions 42 to 51 match the 'HIGH' region motif; that stretch reads PTAPDIHLGH. The 'KMSKS' region signature appears at 226–230; the sequence is KMSKS. Lys229 is an ATP binding site. One can recognise an S4 RNA-binding domain in the interval 334–394; sequence IAISNLLKEA…GKRKFARVTI (61 aa).

It belongs to the class-I aminoacyl-tRNA synthetase family. TyrS type 2 subfamily. In terms of assembly, homodimer.

The protein resides in the cytoplasm. The enzyme catalyses tRNA(Tyr) + L-tyrosine + ATP = L-tyrosyl-tRNA(Tyr) + AMP + diphosphate + H(+). Functionally, catalyzes the attachment of tyrosine to tRNA(Tyr) in a two-step reaction: tyrosine is first activated by ATP to form Tyr-AMP and then transferred to the acceptor end of tRNA(Tyr). This Vibrio cholerae serotype O1 (strain ATCC 39315 / El Tor Inaba N16961) protein is Tyrosine--tRNA ligase 2.